A 106-amino-acid polypeptide reads, in one-letter code: uncharacterized protein (106 aa).

This is an uncharacterized protein from Saccharomyces cerevisiae (strain ATCC 204508 / S288c) (Baker's yeast).